The chain runs to 987 residues: Mediator of RNA polymerase II transcription subunit 24 (987 aa).

6 short sequence motifs (LXXLL motif) span residues 128–132 (LHWLL), 344–348 (LTPLL), 446–450 (LDLLL), 555–559 (LVALL), 786–790 (LPGLL), and 855–859 (LMRLL). Residues Ser-860 and Ser-871 each carry the phosphoserine modification.

It belongs to the Mediator complex subunit 24 family. As to quaternary structure, component of the Mediator complex, which is composed of MED1, MED4, MED6, MED7, MED8, MED9, MED10, MED11, MED12, MED13, MED13L, MED14, MED15, MED16, MED17, MED18, MED19, MED20, MED21, MED22, MED23, MED24, MED25, MED26, MED27, MED29, MED30, MED31, CCNC, CDK8 and CDC2L6/CDK11. The MED12, MED13, CCNC and CDK8 subunits form a distinct module termed the CDK8 module. Mediator containing the CDK8 module is less active than Mediator lacking this module in supporting transcriptional activation. Individual preparations of the Mediator complex lacking one or more distinct subunits have been variously termed ARC, CRSP, DRIP, PC2, SMCC and TRAP. Interacts with AR. Interacts with MED1 and MED10. In terms of tissue distribution, expressed in the adrenal gland, brain, epididymis, heart, kidney, liver, ovary, pancreas, prostate, skeletal muscle, small intestine, spleen, stomach, testis and thymus.

Its subcellular location is the nucleus. Functionally, component of the Mediator complex, a coactivator involved in the regulated transcription of nearly all RNA polymerase II-dependent genes. Mediator functions as a bridge to convey information from gene-specific regulatory proteins to the basal RNA polymerase II transcription machinery. Mediator is recruited to promoters by direct interactions with regulatory proteins and serves as a scaffold for the assembly of a functional preinitiation complex with RNA polymerase II and the general transcription factors. Required for basal and activator-dependent transcription. This chain is Mediator of RNA polymerase II transcription subunit 24 (Med24), found in Mus musculus (Mouse).